We begin with the raw amino-acid sequence, 376 residues long: Erythronate-4-phosphate dehydrogenase (376 aa).

Residues Ser-45 and Thr-67 each contribute to the substrate site. Residues 127-128 (QV), Asp-147, and Thr-176 contribute to the NAD(+) site. The active site involves Arg-209. Asp-233 lines the NAD(+) pocket. Glu-238 is a catalytic residue. His-255 functions as the Proton donor in the catalytic mechanism. Gly-258 is an NAD(+) binding site. Substrate is bound at residue Tyr-259.

It belongs to the D-isomer specific 2-hydroxyacid dehydrogenase family. PdxB subfamily. Homodimer.

It localises to the cytoplasm. It catalyses the reaction 4-phospho-D-erythronate + NAD(+) = (R)-3-hydroxy-2-oxo-4-phosphooxybutanoate + NADH + H(+). The protein operates within cofactor biosynthesis; pyridoxine 5'-phosphate biosynthesis; pyridoxine 5'-phosphate from D-erythrose 4-phosphate: step 2/5. Catalyzes the oxidation of erythronate-4-phosphate to 3-hydroxy-2-oxo-4-phosphonooxybutanoate. This is Erythronate-4-phosphate dehydrogenase from Aliivibrio fischeri (strain ATCC 700601 / ES114) (Vibrio fischeri).